The sequence spans 419 residues: Large ribosomal subunit protein uL4 (419 aa).

N-acetylalanine is present on Ala-2. N6-acetyllysine is present on Lys-14. Arg-97 is subject to Omega-N-methylarginine. An N6-acetyllysine modification is found at Lys-106. Lys-239 is covalently cross-linked (Glycyl lysine isopeptide (Lys-Gly) (interchain with G-Cter in SUMO2)). Lys-259 is modified (N6-acetyllysine). Thr-266 carries the post-translational modification Phosphothreonine. 2 positions are modified to phosphoserine: Ser-290 and Ser-295. The residue at position 300 (Arg-300) is a Citrulline. Lys-327 participates in a covalent cross-link: Glycyl lysine isopeptide (Lys-Gly) (interchain with G-Cter in SUMO2). 2 positions are modified to N6-acetyllysine: Lys-333 and Lys-353. Lys-364 bears the N6-acetyllysine; alternate mark. Lys-364 participates in a covalent cross-link: Glycyl lysine isopeptide (Lys-Gly) (interchain with G-Cter in SUMO1); alternate. Basic and acidic residues predominate over residues 364–379; sequence KSEKVVPEKGTADKKP. Residues 364–419 are disordered; it reads KSEKVVPEKGTADKKPAVGKKGKKVDAKKQKPAGKKVVAKKPAEKKPTTEEKKPAA. At Ser-365 the chain carries Phosphoserine. The segment covering 393-402 has biased composition (basic residues); that stretch reads QKPAGKKVVA. Residues 404 to 419 show a composition bias toward basic and acidic residues; sequence KPAEKKPTTEEKKPAA.

It belongs to the universal ribosomal protein uL4 family. Component of the large ribosomal subunit. May bind IPO9 with low affinity. Interacts with RBM3. Post-translationally, citrullinated by PADI4.

It localises to the cytoplasm. Component of the large ribosomal subunit. The ribosome is a large ribonucleoprotein complex responsible for the synthesis of proteins in the cell. The polypeptide is Large ribosomal subunit protein uL4 (Rpl4) (Mus musculus (Mouse)).